A 449-amino-acid polypeptide reads, in one-letter code: Galactosyl transferase CpsE (449 aa).

Helical transmembrane passes span 5–22 (VVVYFSASLTLTLITPNF), 27–46 (DLLFVLLIHYIVFYLSDFYR), 59–78 (MVLKYSFYYIFISSSLFFIF), 88–107 (SFFTFIAMNSILLYLLNSFL), and 258–280 (FLDITGAIIGLLICGIVAIFLVP).

Belongs to the bacterial sugar transferase family.

Its subcellular location is the cell membrane. Its function is as follows. Galactosyl transferase is essential for the assembly of the group B streptococci (GBS) type III capsular polysaccharide. May be involved in the formation of either or both galactosidic bonds by catalyzing the addition of galactose to an oligosaccharide precursor or to a lipid intermediate. Type III capsular polysaccharide consists of a linear backbone with short side chains ending in residues of N-acetylneuraminic acid or sialic acid. The presence of sialic acid on the surface of the organism inhibits activation of the alternative pathway of complement and is thought to be an important element in the virulence function of the capsule. The protein is Galactosyl transferase CpsE (cpsE) of Streptococcus agalactiae serotype III (strain NEM316).